We begin with the raw amino-acid sequence, 193 residues long: dTTP/UTP pyrophosphatase (193 aa).

The active-site Proton acceptor is Asp73.

This sequence belongs to the Maf family. YhdE subfamily. The cofactor is a divalent metal cation.

Its subcellular location is the cytoplasm. It carries out the reaction dTTP + H2O = dTMP + diphosphate + H(+). It catalyses the reaction UTP + H2O = UMP + diphosphate + H(+). Functionally, nucleoside triphosphate pyrophosphatase that hydrolyzes dTTP and UTP. May have a dual role in cell division arrest and in preventing the incorporation of modified nucleotides into cellular nucleic acids. The protein is dTTP/UTP pyrophosphatase of Caulobacter vibrioides (strain ATCC 19089 / CIP 103742 / CB 15) (Caulobacter crescentus).